We begin with the raw amino-acid sequence, 204 residues long: MSDLVAKTAIDRRLADIVTPVIEGMGFELVRLRLMSGKTRTLQIMADRPDGGIVVDECAEISTAVSAALDVEDPIEENYTLEVSSPGIDRPLTRLKDFDVWTGYEARIETTELIDGRRRFKGELAGTEGDEVLITIEDGRDSYVTIGLKFDWLADAKLILTEELIAEMLRQKKASGNFDESQFDEIEESEGEEADEAEQPPTKH.

The segment at 176-204 is disordered; it reads GNFDESQFDEIEESEGEEADEAEQPPTKH. Acidic residues predominate over residues 181-198; it reads SQFDEIEESEGEEADEAE.

Belongs to the RimP family.

Its subcellular location is the cytoplasm. In terms of biological role, required for maturation of 30S ribosomal subunits. The sequence is that of Ribosome maturation factor RimP from Cereibacter sphaeroides (strain ATCC 17029 / ATH 2.4.9) (Rhodobacter sphaeroides).